Reading from the N-terminus, the 121-residue chain is uncharacterized protein (121 aa).

2 helical membrane passes run 16-36 and 74-94; these read GFMV…GFAV and LYIA…MKTI.

It is found in the cell membrane. This is an uncharacterized protein from Bacillus subtilis (strain 168).